The primary structure comprises 152 residues: Transcriptional regulator MraZ (152 aa).

SpoVT-AbrB domains lie at 5 to 52 (ASSL…PLAQ) and 81 to 124 (ATEY…DEAR).

This sequence belongs to the MraZ family. In terms of assembly, forms oligomers.

The protein localises to the cytoplasm. Its subcellular location is the nucleoid. In Pseudoalteromonas translucida (strain TAC 125), this protein is Transcriptional regulator MraZ.